The sequence spans 123 residues: DNA-directed RNA polymerase I subunit RPA12 (123 aa).

C17, C20, C35, C38, C84, and C87 together coordinate Zn(2+). The C4-type zinc-finger motif lies at 17–38 (CPDCGSVLPLPGIQDTVICSRC). Residues 80–120 (IDRRCPRCGHEGMAYHTRQMRSADEGQTVFYTCINCKFQEK) form a TFIIS-type zinc finger. The short motif at 103–104 (DE) is the Hairpin element. Zn(2+)-binding residues include C112 and C115.

Belongs to the archaeal RpoM/eukaryotic RPA12/RPB9/RPC11 RNA polymerase family. As to quaternary structure, component of the RNA polymerase I (Pol I) complex consisting of 13 subunits: a ten-subunit catalytic core composed of POLR1A/RPA1, POLR1B/RPA2, POLR1C/RPAC1, POLR1D/RPAC2, POLR1H/RPA12, POLR2E/RPABC1, POLR2F/RPABC2, POLR2H/RPABC3, POLR2K/RPABC4 and POLR2L/RPABC5; a mobile stalk subunit POLR1F/RPA43 protruding from the core and additional subunits homologous to general transcription factors POLR1E/RPA49 and POLR1G/RPA34. Part of Pol I pre-initiation complex (PIC), in which Pol I core assembles with RRN3 and promoter-bound UTBF and SL1/TIF-IB complex.

Its subcellular location is the nucleus. It localises to the nucleolus. Core component of RNA polymerase I (Pol I), a DNA-dependent RNA polymerase which synthesizes ribosomal RNA precursors using the four ribonucleoside triphosphates as substrates. Can mediate Pol I proofreading of the nascent RNA transcript. Anchors into the Pol I active site to monitor transcription fidelity and cleave mis-incorporated 5'-ribonucleotides. This chain is DNA-directed RNA polymerase I subunit RPA12, found in Mus musculus (Mouse).